The chain runs to 1423 residues: DNA-directed RNA polymerase subunit beta' (1423 aa).

Cysteine 71, cysteine 73, cysteine 86, and cysteine 89 together coordinate Zn(2+). Aspartate 461, aspartate 463, and aspartate 465 together coordinate Mg(2+). Zn(2+) contacts are provided by cysteine 815, cysteine 889, cysteine 896, and cysteine 899.

Belongs to the RNA polymerase beta' chain family. As to quaternary structure, the RNAP catalytic core consists of 2 alpha, 1 beta, 1 beta' and 1 omega subunit. When a sigma factor is associated with the core the holoenzyme is formed, which can initiate transcription. Mg(2+) serves as cofactor. It depends on Zn(2+) as a cofactor.

The catalysed reaction is RNA(n) + a ribonucleoside 5'-triphosphate = RNA(n+1) + diphosphate. Its function is as follows. DNA-dependent RNA polymerase catalyzes the transcription of DNA into RNA using the four ribonucleoside triphosphates as substrates. This Actinobacillus pleuropneumoniae serotype 3 (strain JL03) protein is DNA-directed RNA polymerase subunit beta'.